The chain runs to 176 residues: Ferritin heavy chain B (176 aa).

The Ferritin-like diiron domain occupies 7 to 156 (QNFNSDCEAA…DYITNLKRLG (150 aa)). 5 residues coordinate Fe cation: E24, E59, H62, E104, and Q138.

Belongs to the ferritin family. In terms of assembly, oligomer of 24 subunits. There are two types of subunits: L (light) chain and H (heavy) chain. The functional molecule is roughly spherical and contains a central cavity into which the insoluble mineral iron core is deposited.

Its subcellular location is the cytoplasm. The catalysed reaction is 4 Fe(2+) + O2 + 4 H(+) = 4 Fe(3+) + 2 H2O. Stores iron in a soluble, non-toxic, readily available form. Important for iron homeostasis. Has ferroxidase activity. Iron is taken up in the ferrous form and deposited as ferric hydroxides after oxidation. The chain is Ferritin heavy chain B (fth1-b) from Xenopus laevis (African clawed frog).